The sequence spans 622 residues: Mitochondrial distribution and morphology protein 34 (622 aa).

Positions 1-204 constitute an SMP-LTD domain; sequence MSFKVNWNSL…LPTLIHQLSL (204 aa). Disordered stretches follow at residues 364 to 393, 442 to 468, and 572 to 592; these read YSNKDAPNKPKRRRIKVHKKSKAKQDDNTV, LETMSTGSSSSASSQVIAHPTPKRAYQ, and LDGGKNSANTNNSSGGKNFRP. The span at 372–385 shows a compositional bias: basic residues; that stretch reads KPKRRRIKVHKKSK. Over residues 446–455 the composition is skewed to low complexity; it reads STGSSSSASS. A compositionally biased stretch (polar residues) spans 577–587; that stretch reads NSANTNNSSGG.

Belongs to the MDM34 family. As to quaternary structure, component of the ER-mitochondria encounter structure (ERMES) or MDM complex, composed of MMM1, MDM10, MDM12 and MDM34.

It is found in the mitochondrion outer membrane. Functionally, component of the ERMES/MDM complex, which serves as a molecular tether to connect the endoplasmic reticulum (ER) and mitochondria. Components of this complex are involved in the control of mitochondrial shape and protein biogenesis, and function in nonvesicular lipid trafficking between the ER and mitochondria. MDM34 is required for the interaction of the ER-resident membrane protein MMM1 and the outer mitochondrial membrane-resident beta-barrel protein MDM10. This Candida albicans (strain WO-1) (Yeast) protein is Mitochondrial distribution and morphology protein 34.